Consider the following 60-residue polypeptide: Sec-independent protein translocase protein TatA (60 aa).

The helical transmembrane segment at 1–21 (MLSNIGVPGLILILVIALVIF) threads the bilayer.

The protein belongs to the TatA/E family. Forms a complex with TatC.

The protein localises to the cell membrane. Part of the twin-arginine translocation (Tat) system that transports large folded proteins containing a characteristic twin-arginine motif in their signal peptide across membranes. TatA could form the protein-conducting channel of the Tat system. This Anoxybacillus flavithermus (strain DSM 21510 / WK1) protein is Sec-independent protein translocase protein TatA.